We begin with the raw amino-acid sequence, 543 residues long: Acrosin-binding protein (543 aa).

Residues 1-25 form the signal peptide; sequence MRKPAAGFLPSLLKVLLLPLAPAAA. Positions 26–106 are pro-ACR binding; it reads QDSTQASTPG…ASWFESFCQF (81 aa). Positions 26–273 are cleaved as a propeptide — removed in mature form; the sequence is QDSTQASTPG…NPSSFAPRVR (248 aa). The disordered stretch occupies residues 185-272; that stretch reads SLGGQEQAPE…SNPSSFAPRV (88 aa). Residues 192–220 show a composition bias toward basic and acidic residues; that stretch reads APEHKQEQGVEHRQEPTQEHKQEEGQKQE. The span at 221 to 231 shows a compositional bias: acidic residues; sequence EQEEEQEEEGK. A compositionally biased stretch (basic and acidic residues) spans 232–243; that stretch reads QEEGQGTKEGRE. The segment at 319–427 is pro-ACR binding; the sequence is LPHTEALLVL…NQVGSPESGR (109 aa).

As to quaternary structure, binds proacrosin (pro-ACR). Does not bind the mature form of ACR. In terms of processing, phosphorylated on Tyr residues in capacitated sperm. The N-terminus is blocked. Post-translationally, synthesized as a 60-kDa precursor, the 32-kDa mature form is post-translationally produced by the removal of the N-terminal half of the precursor during sperm maturation in the testis and/or epididymis. Expression restricted to testis in normal tissue. Expressed in a wide spectrum of cancers, including bladder, breast, liver, lung and colon cancers.

Its subcellular location is the secreted. It localises to the cytoplasmic vesicle. It is found in the secretory vesicle. The protein resides in the acrosome. In terms of biological role, acrosomal protein that maintains proacrosin (pro-ACR) as an enzymatically inactive zymogen in the acrosome. Involved also in the acrosome formation. The polypeptide is Acrosin-binding protein (Homo sapiens (Human)).